The primary structure comprises 324 residues: Type II restriction enzyme AplI (324 aa).

It belongs to the BsuBI/PstI type II restriction endonuclease family. Mg(2+) is required as a cofactor.

The catalysed reaction is Endonucleolytic cleavage of DNA to give specific double-stranded fragments with terminal 5'-phosphates.. Activated by K(+) and Na(+) ions, whereas NH(4)(+) ions appear to inhibit endonuclease activity. Functionally, a P subtype restriction enzyme that recognizes the double-stranded sequence 5'-CTGCAG-3' and cleaves after A-5. This is Type II restriction enzyme AplI (aplIR) from Arthrospira platensis (strain NIES-39 / UTEX 3086 / IAM M-135) (Spirulina platensis).